The following is a 925-amino-acid chain: Proto-oncogene DBL (925 aa).

Positions 1–88 (MAEANPRRGK…ELGGTLQYCH (88 aa)) constitute a CRAL-TRIO domain. One copy of the Spectrin repeat lies at 221-322 (WKFEQDFQQL…EIKAKRIQLS (102 aa)). The DH domain maps to 495–675 (LKNHVLNELI…LDLLKSVNDS (181 aa)). In terms of domain architecture, PH spans 687–809 (NLNELGKMIM…WLKEIRNILL (123 aa)).

It belongs to the MCF2 family. As to quaternary structure, interacts with an array of inositol phospholipids such as phosphatidylinositol 3-phosphate (PI3P), phosphatidylinositol 4-phosphate (PI4P) and phosphatidylinositol 5-phosphate (PI5P). May interact with CCPG1. Phosphorylation by TNK2 enhances guanine nucleotide exchange factor (GEF) activity toward Rho family proteins. As to expression, isoform 1 is expressed only in brain. Isoform 3 is expressed in heart, kidney, spleen, liver and testis. Isoform 4 is expressed in brain, heart, kidney, testis, placenta, stomach and peripheral blood. The protein is detectable in brain, heart, kidney, intestine, muscle, lung and testis.

It is found in the cytoplasm. It localises to the membrane. Guanine nucleotide exchange factor (GEF) that modulates the Rho family of GTPases. Promotes the conversion of some member of the Rho family GTPase from the GDP-bound to the GTP-bound form. Isoform 1 exhibits no activity toward RHOA, RAC1 or CDC42. Isoform 2 exhibits decreased GEF activity toward CDC42. Isoform 3 exhibits a weak but significant activity toward RAC1 and CDC42. Isoform 4 exhibits significant activity toward RHOA and CDC42. The truncated DBL oncogene is active toward RHOA, RAC1 and CDC42. This Homo sapiens (Human) protein is Proto-oncogene DBL (MCF2).